A 280-amino-acid polypeptide reads, in one-letter code: Protease HtpX (280 aa).

Transmembrane regions (helical) follow at residues 7 to 26 (TFIL…GLLG) and 30 to 49 (GMLV…YWYS). His-129 contacts Zn(2+). Glu-130 is a catalytic residue. A Zn(2+)-binding site is contributed by His-133. The next 2 membrane-spanning stretches (helical) occupy residues 146–166 (ATIA…SMFG) and 178–198 (VVGM…QMAI). Residue Glu-203 coordinates Zn(2+).

This sequence belongs to the peptidase M48B family. The cofactor is Zn(2+).

The protein resides in the cell inner membrane. This Legionella pneumophila (strain Corby) protein is Protease HtpX.